The following is a 203-amino-acid chain: Endo-type membrane-bound lytic murein transglycosylase A (203 aa).

A signal peptide spans 1–15; it reads MKLRWLLILVVFLAG. C16 carries N-palmitoyl cysteine lipidation. A lipid anchor (S-diacylglycerol cysteine) is attached at C16.

This sequence belongs to the transglycosylase Slt family.

It localises to the cell outer membrane. The enzyme catalyses Endolytic cleavage of the (1-&gt;4)-beta-glycosidic linkage between N-acetylmuramic acid (MurNAc) and N-acetylglucosamine (GlcNAc) residues in peptidoglycan with concomitant formation of a 1,6-anhydrobond in the MurNAc residue.. Murein-degrading enzyme. May play a role in recycling of muropeptides during cell elongation and/or cell division. Preferentially cleaves at a distance of more than two disaccharide units from the ends of the glycan chain. This Klebsiella pneumoniae subsp. pneumoniae (strain ATCC 700721 / MGH 78578) protein is Endo-type membrane-bound lytic murein transglycosylase A.